The chain runs to 610 residues: MIASQFLSALTLVLLIKESGAWSYSASTTNMTFDEASAYCQQRYTHLVAIQNQEEIKYLNSIFNHSPSYYWIGIRKVNDKWVWIGTQKPLTEEAKNWAPGEPNNKQNEDCVEIYIKRYKDAGKWNDENCNKKKLALCYTAACTHTSCSGHGECVETINNYTCQCHPGFTGLRCEQVVTCQAQEAPEHGRLVCTHPLGNFSYNSSCSVSCEEGYLPSRTEAMQCTSSGEWSAPPPACHVVECDALTNPANGVMQCSQSPGSFPWNTTCTFDCQEGFELTGPQHLQCTPSGNWDNEKPTCKAVTCGAGGHPQNGFVNCSHSSAGEFTFNSSCNFTCEEGFVLQGPAQVECTAQGQWTQQVPVCKALQCKALSRPERGYMSCRPSTSGSFQSGSSCEFSCEQGFVLKGSKKLRCGPTGEWDSEKPTCEAVRCDAVRQPQGGLVRCTHSAAGEFTYKSSCAFSCEEGFELRGSAQLECTLQGQWTQEVPSCQVVQCASLAVPGKVSMSCSGEPVFGAVCTFACPEGWTLNGSAALTCGATGHWSGMLPTCEATAKSNIPLTVGLSAAGTSLLTLASFLFWLLKRLRRKAKKFVPASSYQSLQSDGSYQMPSESA.

The N-terminal stretch at 1–21 (MIASQFLSALTLVLLIKESGA) is a signal peptide. A C-type lectin domain is found at 22 to 138 (WSYSASTTNM…CNKKKLALCY (117 aa)). Topologically, residues 22–555 (WSYSASTTNM…CEATAKSNIP (534 aa)) are extracellular. A glycan (N-linked (GlcNAc...) asparagine) is linked at Asn-30. 19 cysteine pairs are disulfide-bonded: Cys-40–Cys-137, Cys-110–Cys-129, Cys-142–Cys-153, Cys-147–Cys-162, Cys-164–Cys-173, Cys-179–Cys-223, Cys-192–Cys-205, Cys-209–Cys-236, Cys-241–Cys-285, Cys-254–Cys-267, Cys-271–Cys-298, Cys-303–Cys-348, Cys-334–Cys-361, Cys-366–Cys-411, Cys-397–Cys-424, Cys-429–Cys-474, Cys-460–Cys-487, Cys-492–Cys-533, and Cys-519–Cys-546. Glu-101, Asn-103, and Glu-108 together coordinate Ca(2+). A carbohydrate contacts are provided by residues 101–108 (EPNNKQNE), 112–117 (EIYIKR), and 125–127 (NDE). 2 residues coordinate Ca(2+): Asn-125 and Asp-126. The 36-residue stretch at 139-174 (TAACTHTSCSGHGECVETINNYTCQCHPGFTGLRCE) folds into the EGF-like domain. Asn-159 carries an N-linked (GlcNAc...) asparagine glycan. 6 Sushi domains span residues 177–238 (VTCQ…ACHV), 239–300 (VECD…TCKA), 314–363 (VNCS…VCKA), 365–426 (QCKA…TCEA), 428–489 (RCDA…SCQV), and 490–548 (VQCA…TCEA). 2 N-linked (GlcNAc...) asparagine glycosylation sites follow: Asn-198 and Asn-202. Asn-264 carries N-linked (GlcNAc...) asparagine glycosylation. N-linked (GlcNAc...) asparagine glycosylation is found at Asn-315, Asn-327, and Asn-331. An N-linked (GlcNAc...) asparagine glycan is attached at Asn-526. A helical transmembrane segment spans residues 556–577 (LTVGLSAAGTSLLTLASFLFWL). Over 578 to 610 (LKRLRRKAKKFVPASSYQSLQSDGSYQMPSESA) the chain is Cytoplasmic.

This sequence belongs to the selectin/LECAM family. Interacts with SELPLG/PSGL1 and PODXL2 through the sialyl Lewis X epitope. SELPLG sulfation appears not to be required for this interaction.

The protein localises to the cell membrane. Functionally, cell-surface glycoprotein having a role in immunoadhesion. Mediates in the adhesion of blood neutrophils in cytokine-activated endothelium through interaction with SELPLG/PSGL1. May have a role in capillary morphogenesis. In Equus caballus (Horse), this protein is E-selectin (SELE).